Reading from the N-terminus, the 547-residue chain is Delta-guaiene synthase 3 (547 aa).

Mg(2+) is bound by residues Asp299, Asp303, and Asp444. A DDXXD motif motif is present at residues 299–303 (DDTYD).

This sequence belongs to the terpene synthase family. Mg(2+) is required as a cofactor.

It carries out the reaction (2E,6E)-farnesyl diphosphate = delta-guaiene + diphosphate. The enzyme catalyses (2E,6E)-farnesyl diphosphate = alpha-guaiene + diphosphate. The protein operates within secondary metabolite biosynthesis; terpenoid biosynthesis. Sesquiterpene synthase involved in the biosynthesis of delta-guaiene (78.2%) and alpha-guaiene (20.9%), two structures composed of five- and seven-membered rings. Also produces 0.9% of alpha-humulene. This is Delta-guaiene synthase 3 (C4) from Aquilaria crassna (Eagle wood).